We begin with the raw amino-acid sequence, 522 residues long: ATP synthase subunit alpha, mitochondrial (522 aa).

172 to 179 is an ATP binding site; that stretch reads GDRQTGKT.

This sequence belongs to the ATPase alpha/beta chains family. In terms of assembly, F-type ATPases have 2 components, CF(1) - the catalytic core - and CF(0) - the membrane proton channel. CF(1) has five subunits: alpha(3), beta(3), gamma(1), delta(1), epsilon(1). CF(0) has three main subunits: a, b and c.

It is found in the mitochondrion. The protein localises to the mitochondrion inner membrane. Its function is as follows. Mitochondrial membrane ATP synthase (F(1)F(0) ATP synthase or Complex V) produces ATP from ADP in the presence of a proton gradient across the membrane which is generated by electron transport complexes of the respiratory chain. F-type ATPases consist of two structural domains, F(1) - containing the extramembraneous catalytic core, and F(0) - containing the membrane proton channel, linked together by a central stalk and a peripheral stalk. During catalysis, ATP synthesis in the catalytic domain of F(1) is coupled via a rotary mechanism of the central stalk subunits to proton translocation. Subunits alpha and beta form the catalytic core in F(1). Rotation of the central stalk against the surrounding alpha(3)beta(3) subunits leads to hydrolysis of ATP in three separate catalytic sites on the beta subunits. Subunit alpha does not bear the catalytic high-affinity ATP-binding sites. This Acanthamoeba castellanii (Amoeba) protein is ATP synthase subunit alpha, mitochondrial (ATP1).